Consider the following 289-residue polypeptide: Alpha-soluble NSF attachment protein (289 aa).

A TPR repeat occupies 112-145 (GKYYKEIAELYELEQNFEQAIIYFEKAADIYQSE).

Belongs to the SNAP family.

The protein localises to the membrane. Functionally, required for vesicular transport between the endoplasmic reticulum and the Golgi apparatus. This is Alpha-soluble NSF attachment protein from Vitis vinifera (Grape).